We begin with the raw amino-acid sequence, 114 residues long: MKERNISIKSKVEIQELFKKGRFIRIEGINVFYEFTCLAISRILVTFPRIFKGAVKRNRVRRIFKECFRKQFALLKDRYVDFIFVVYPQKADVNYHEVETILKNIVVYIMKRNM.

The protein belongs to the RnpA family. In terms of assembly, consists of a catalytic RNA component (M1 or rnpB) and a protein subunit.

The enzyme catalyses Endonucleolytic cleavage of RNA, removing 5'-extranucleotides from tRNA precursor.. RNaseP catalyzes the removal of the 5'-leader sequence from pre-tRNA to produce the mature 5'-terminus. It can also cleave other RNA substrates such as 4.5S RNA. The protein component plays an auxiliary but essential role in vivo by binding to the 5'-leader sequence and broadening the substrate specificity of the ribozyme. This is Ribonuclease P protein component from Borrelia hermsii (strain HS1 / DAH).